Here is a 243-residue protein sequence, read N- to C-terminus: Pyridoxine 5'-phosphate synthase (243 aa).

3-amino-2-oxopropyl phosphate is bound at residue N9. 11–12 (DH) contacts 1-deoxy-D-xylulose 5-phosphate. R20 is a 3-amino-2-oxopropyl phosphate binding site. Residue H45 is the Proton acceptor of the active site. Residues R47 and H52 each contribute to the 1-deoxy-D-xylulose 5-phosphate site. E72 functions as the Proton acceptor in the catalytic mechanism. T102 is a binding site for 1-deoxy-D-xylulose 5-phosphate. The Proton donor role is filled by H193. 3-amino-2-oxopropyl phosphate is bound by residues G194 and 215–216 (GH).

The protein belongs to the PNP synthase family. In terms of assembly, homooctamer; tetramer of dimers.

It is found in the cytoplasm. It carries out the reaction 3-amino-2-oxopropyl phosphate + 1-deoxy-D-xylulose 5-phosphate = pyridoxine 5'-phosphate + phosphate + 2 H2O + H(+). Its pathway is cofactor biosynthesis; pyridoxine 5'-phosphate biosynthesis; pyridoxine 5'-phosphate from D-erythrose 4-phosphate: step 5/5. Catalyzes the complicated ring closure reaction between the two acyclic compounds 1-deoxy-D-xylulose-5-phosphate (DXP) and 3-amino-2-oxopropyl phosphate (1-amino-acetone-3-phosphate or AAP) to form pyridoxine 5'-phosphate (PNP) and inorganic phosphate. The polypeptide is Pyridoxine 5'-phosphate synthase (Shigella dysenteriae serotype 1 (strain Sd197)).